The primary structure comprises 667 residues: MPPIKRQPGGWVLPGYKYLGPFNPLENGEPVNKADRAAQAHDKSYSEIIKSGKNPYLYFNKADEKFIDDLKNDWSLGGIIGSSFFKLKRAVAPALGNKERAQKRHFYFANSNKGAKKPKNNEPKPGTSKMSENEIQDQQPSGSMEERGGGGGAVGSVGGGKGSSVGISTGGWVGGSYFTDSYVITKNTRQFLVKIQNDHKYRTENIIPSNAGGKSQRCVSTPWSYFNFNQYSSHFSPQDWQHLTNEYKRFKPRKMHVKIYNLQIKQILSNGADTTYNNDLTAGVHIFCDGEHAYPNATHPWDEDVMPELPYETWYLFQYGYIPVIHELAEMEDANAVEKAIALQIPFFMLENSDHEVLRTGESTEFTFDFDCEWINNERAYIPPGLMFNPKVPTRRAQYIRQHGNTASSNTRIQPYAKPTSWMTGPGLLSAQRVGPAGSDTASWMVVVNPDGAAVNSGMAGVGSGFDPPSGSLRPTDLEYKIQWYQTPAGTNSDGNIISNPPLSMLRDQALYRGNQTTYNLCSDVWMFPNQIWDRYPITRENPIWCKKPRSDKNTIIDPFDGTLAMDHPPGTIFIKMAKIPVPSNNNADSYLNIYCTGQVSCEIVWEVERYATKNWRPERRHTALGLGIGGEENVNPTYHVDKNGKYIQPTTWDMCYPIKTNINKVL.

The interval 11–66 is phospholipase A2-like; sequence WVLPGYKYLGPFNPLENGEPVNKADRAAQAHDKSYSEIIKSGKNPYLYFNKADEKF. The interval 107–159 is disordered; the sequence is YFANSNKGAKKPKNNEPKPGTSKMSENEIQDQQPSGSMEERGGGGGAVGSVGG. The span at 149 to 159 shows a compositional bias: gly residues; the sequence is GGGGAVGSVGG. Residues 610–621 carry the Nuclear localization signal motif; it reads RYATKNWRPERR.

It belongs to the parvoviridae capsid protein family. Heteromultimer of isoform Minor capsid protein VP1, isoform Minor capsid protein VP2 and isoform Major capsid protein VP3. In terms of assembly, homomultimer. 10 fold more abundant than the minor capsid proteins VP1 and VP2. Heteromultimer of isoform Minor capsid protein VP1, isoform Minor capsid protein VP2 and isoform Major capsid protein VP3.

The protein localises to the virion. Its subcellular location is the host nucleus. The protein resides in the host cytoplasm. It carries out the reaction a 1,2-diacyl-sn-glycero-3-phosphocholine + H2O = a 1-acyl-sn-glycero-3-phosphocholine + a fatty acid + H(+). In terms of biological role, capsid proteins self-assembles to form an icosahedral capsid with a T=1 symmetry, about 26 nm in diameter, and consisting of 60 copies of three size variants of the capsid proteins, VP1, and VP3, which differ by the presence of an N-terminal extension in the minor protein VP1. The capsid has a channel at the 5-fold axis and there are densities extending the 5-fold axis into the interior of the capsid. The capsid encapsulates the genomic ssDNA. Binding to the host receptors also induces capsid rearrangements leading to surface exposure of VP1 N-terminus, specifically its phospholipase A2-like region. The additional N-terminal region of isoform Minor capsid protein VP1, called VP1u, may serve as a lipolytic enzyme to breach the endosomal membrane during entry into host cell and might contribute to virus transport to the nucleus. In Homo sapiens (Human), this protein is Minor capsid protein VP1 (VP1).